The chain runs to 155 residues: Pathogenesis-related protein STH-21 (155 aa).

It belongs to the BetVI family.

The sequence is that of Pathogenesis-related protein STH-21 (STH-21) from Solanum tuberosum (Potato).